Here is a 478-residue protein sequence, read N- to C-terminus: Probable cytosolic Fe-S cluster assembly factor AAEL012261 (478 aa).

[4Fe-4S] cluster-binding residues include Cys23, Cys69, Cys72, Cys75, Cys189, Cys245, Cys396, and Cys400.

Belongs to the NARF family.

Component of the cytosolic iron-sulfur (Fe/S) protein assembly machinery. Required for maturation of extramitochondrial Fe/S proteins. The chain is Probable cytosolic Fe-S cluster assembly factor AAEL012261 from Aedes aegypti (Yellowfever mosquito).